We begin with the raw amino-acid sequence, 383 residues long: Lipid-A-disaccharide synthase (383 aa).

It belongs to the LpxB family.

The catalysed reaction is a lipid X + a UDP-2-N,3-O-bis[(3R)-3-hydroxyacyl]-alpha-D-glucosamine = a lipid A disaccharide + UDP + H(+). Its pathway is bacterial outer membrane biogenesis; LPS lipid A biosynthesis. Functionally, condensation of UDP-2,3-diacylglucosamine and 2,3-diacylglucosamine-1-phosphate to form lipid A disaccharide, a precursor of lipid A, a phosphorylated glycolipid that anchors the lipopolysaccharide to the outer membrane of the cell. The polypeptide is Lipid-A-disaccharide synthase (Aliivibrio fischeri (strain ATCC 700601 / ES114) (Vibrio fischeri)).